The following is a 924-amino-acid chain: Ubiquitin carboxyl-terminal hydrolase 15 (924 aa).

The Zn(2+) site is built by Cys-130, Cys-133, Cys-141, Cys-144, Cys-150, Cys-154, His-163, and Cys-167. The segment at 130–167 adopts an MYND-type zinc-finger fold; sequence CARCFGPAKTRCSRCKSVRYCSGKCQIIHWRVAHKDEC. Residues 226–236 show a composition bias toward polar residues; sequence DITPQINTQGR. 2 disordered regions span residues 226–301 and 317–366; these read DITP…VDSS and SHKH…TSKK. Over residues 247–256 the composition is skewed to basic and acidic residues; the sequence is ANRESCRRDS. A compositionally biased stretch (polar residues) spans 331-362; that stretch reads GCPNTQYPSNGTRTATLPRTGINKSGEQSCTE. Positions 438 to 744 constitute a USP domain; that stretch reads RGLVNCGNSC…GAYMLFYMRS (307 aa). Catalysis depends on Cys-447, which acts as the Nucleophile. The active-site Proton acceptor is the His-703. The disordered stretch occupies residues 750–793; the sequence is RGEHNGKAPVHHSQPRNEMKEQRKPVNRFKPRADHKNTESSSSE. Residues 764-773 are compositionally biased toward basic and acidic residues; it reads PRNEMKEQRK.

It belongs to the peptidase C19 family. Interacts with DA1. As to expression, highly expressed in rosette leaves and inflorescence. Expressed at low levels in cotyledons, stems, cauline leaves and siliques.

It localises to the cytoplasm. The protein resides in the nucleus. It carries out the reaction Thiol-dependent hydrolysis of ester, thioester, amide, peptide and isopeptide bonds formed by the C-terminal Gly of ubiquitin (a 76-residue protein attached to proteins as an intracellular targeting signal).. In terms of biological role, recognizes and hydrolyzes the peptide bond at the C-terminal Gly of ubiquitin. Involved in the processing of poly-ubiquitin precursors as well as that of ubiquitinated proteins. Involved in the regulation of organ size. Acts as a positive regulator of cell proliferation. Possesses deubiquitinating enzyme activity in vitro. The enzyme activity of UBP15 is required for its function in regulation of cell proliferation. Functions antagonistically in a common pathway with DA1 to regulate seed size. Acts maternally to regulate seed size by promoting cell proliferation in the integuments of ovules and developing seeds. Functions independently of DA2 and BB. This is Ubiquitin carboxyl-terminal hydrolase 15 from Arabidopsis thaliana (Mouse-ear cress).